A 476-amino-acid chain; its full sequence is Thyroid receptor-interacting protein 6 (476 aa).

Positions 1–12 (MSGPTWLPPKQP) are enriched in pro residues. Disordered regions lie at residues 1 to 93 (MSGP…PGSL) and 108 to 253 (NGGR…QPPE). Position 25 is an asymmetric dimethylarginine; alternate (R25). Residue R25 is modified to Omega-N-methylarginine; alternate. A Phosphotyrosine; by SRC modification is found at Y55. S92 is modified (phosphoserine). An Omega-N-methylarginine modification is found at R111. Phosphoserine is present on S142. Over residues 152 to 167 (PTPASYTTASTPAGPA) the composition is skewed to low complexity. Omega-N-methylarginine occurs at positions 179 and 186. Position 189 is a phosphoserine (S189). R205, R236, and R238 each carry omega-N-methylarginine. S249 bears the Phosphoserine mark. LIM zinc-binding domains lie at 279-316 (CGGC…QLRG), 339-398 (CATC…FAPR), and 399-467 (CSVC…RIQE). The segment at 469–476 (SATVTTDC) is interaction with MAGI1 and PTPN13.

This sequence belongs to the zyxin/ajuba family. In terms of assembly, specifically interacts with the ligand binding domain of the thyroid receptor (TR) in the presence of thyroid hormone. Interacts (via the third LIM domain and C-terminus) with PTPN13 (via the second PDZ domain). Interacts (via the second LIM domain or via the third LIM domain plus C-terminus) with PDLIM4 (via PDZ domain). Found in a complex with PTPN13 and PDLIM4. Interacts with SVIL isoform 2. Interacts with LPAR2 but not other LPA receptors. Interacts with PRKAA2. Interacts with MAGI1. Interacts with SCRIB. In case of infection, interacts with S.typhimurium protein sseI. Post-translationally, phosphorylation at Tyr-55 by SRC is required for enhancement of lysophosphatidic acid-induced cell migration. Tyr-55 is dephosphorylated by PTPN13. Abundantly expressed in kidney, liver and lung. Lower levels in heart, placenta and pancreas. Expressed in colonic epithelial cells. Up-regulated in colonic tumors.

It localises to the cytoplasm. The protein resides in the cytoskeleton. Its subcellular location is the cell junction. It is found in the focal adhesion. The protein localises to the nucleus. Functionally, relays signals from the cell surface to the nucleus to weaken adherens junction and promote actin cytoskeleton reorganization and cell invasiveness. Involved in lysophosphatidic acid-induced cell adhesion and migration. Acts as a transcriptional coactivator for NF-kappa-B and JUN, and mediates the transrepression of these transcription factors induced by glucocorticoid receptor. The protein is Thyroid receptor-interacting protein 6 (TRIP6) of Homo sapiens (Human).